The following is a 567-amino-acid chain: MFS-type transporter poxA (567 aa).

Over residues 1–23 the composition is skewed to basic and acidic residues; the sequence is MPASDRTSETGDVEKVTAAETPK. The disordered stretch occupies residues 1–24; that stretch reads MPASDRTSETGDVEKVTAAETPKE. 10 helical membrane-spanning segments follow: residues 35 to 55, 77 to 97, 108 to 128, 141 to 161, 165 to 185, 197 to 217, 240 to 260, 271 to 291, 311 to 331, and 349 to 369; these read ALTG…LFLG, ADIG…QLLA, LVFL…GVAV, GAGA…VVPL, SLIL…GPVI, WCFY…ILFF, LAGC…LQWG, SATI…FLIW, IIAS…VGYF, and VMLL…GVIV. Asn-370 carries an N-linked (GlcNAc...) asparagine glycan. Helical transmembrane passes span 372–392, 410–430, 436–456, and 515–535; these read TGYF…GSGL, ILQG…QVAL, LIPV…SIML, and AIAG…LVSF. Residues 547–567 are disordered; sequence EENKKEAAEEEEEVKVAAVEA.

This sequence belongs to the major facilitator superfamily. TCR/Tet family.

Its subcellular location is the cell membrane. Functionally, MFS-type transporter; part of the gene cluster that mediates the biosynthesis of oxaleimides, cytotoxic compounds containing an unusual disubstituted succinimide moiety. The protein is MFS-type transporter poxA of Penicillium oxalicum (strain 114-2 / CGMCC 5302) (Penicillium decumbens).